A 206-amino-acid chain; its full sequence is FMN-dependent NADH:quinone oxidoreductase 4 (206 aa).

Residues Ser-10 and 136 to 139 (SSGG) contribute to the FMN site.

This sequence belongs to the azoreductase type 1 family. Homodimer. FMN serves as cofactor.

The catalysed reaction is 2 a quinone + NADH + H(+) = 2 a 1,4-benzosemiquinone + NAD(+). It carries out the reaction N,N-dimethyl-1,4-phenylenediamine + anthranilate + 2 NAD(+) = 2-(4-dimethylaminophenyl)diazenylbenzoate + 2 NADH + 2 H(+). In terms of biological role, quinone reductase that provides resistance to thiol-specific stress caused by electrophilic quinones. Functionally, also exhibits azoreductase activity. Catalyzes the reductive cleavage of the azo bond in aromatic azo compounds to the corresponding amines. The sequence is that of FMN-dependent NADH:quinone oxidoreductase 4 from Pseudomonas fluorescens (strain ATCC BAA-477 / NRRL B-23932 / Pf-5).